The primary structure comprises 277 residues: Large ribosomal subunit protein uL2 (277 aa).

The segment at 222–265 is disordered; it reads GVAMNPIDHPHGGGEGRTSGGRHPVTPWGKPTKGKKTRTNKSTD.

This sequence belongs to the universal ribosomal protein uL2 family. In terms of assembly, part of the 50S ribosomal subunit. Forms a bridge to the 30S subunit in the 70S ribosome.

Its function is as follows. One of the primary rRNA binding proteins. Required for association of the 30S and 50S subunits to form the 70S ribosome, for tRNA binding and peptide bond formation. It has been suggested to have peptidyltransferase activity; this is somewhat controversial. Makes several contacts with the 16S rRNA in the 70S ribosome. The protein is Large ribosomal subunit protein uL2 of Bradyrhizobium sp. (strain BTAi1 / ATCC BAA-1182).